Here is a 73-residue protein sequence, read N- to C-terminus: Disintegrin molossin (73 aa).

The 73-residue stretch at 1–73 folds into the Disintegrin domain; it reads EAGIECDCGS…ADCPRNRFHA (73 aa). Intrachain disulfides connect C6/C21, C8/C16, C15/C38, C29/C35, C34/C59, and C47/C66. The Cell attachment site motif lies at 51–53; the sequence is RGD.

Belongs to the venom metalloproteinase (M12B) family. P-II subfamily. P-IIa sub-subfamily. In terms of assembly, monomer (disintegrin). In terms of tissue distribution, expressed by the venom gland.

It is found in the secreted. Functionally, inhibits fibrinogen interaction with platelets. Acts by binding to alpha-IIb/beta-3 (ITGA2B/ITGB3) on the platelet surface and inhibits aggregation induced by ADP, thrombin, platelet-activating factor and collagen. This is Disintegrin molossin from Crotalus molossus molossus (Northern black-tailed rattlesnake).